The sequence spans 233 residues: Large ribosomal subunit protein uL1 (233 aa).

It belongs to the universal ribosomal protein uL1 family. In terms of assembly, part of the 50S ribosomal subunit.

Binds directly to 23S rRNA. The L1 stalk is quite mobile in the ribosome, and is involved in E site tRNA release. Its function is as follows. Protein L1 is also a translational repressor protein, it controls the translation of the L11 operon by binding to its mRNA. In Aeromonas salmonicida (strain A449), this protein is Large ribosomal subunit protein uL1.